The following is a 196-amino-acid chain: Thymidine kinase (196 aa).

Residue Gly-17 to Thr-24 participates in ATP binding. The Proton acceptor role is filled by Glu-92. Phe-121 lines the substrate pocket. 2 residues coordinate Zn(2+): Cys-146 and Cys-149. Leu-166–Gly-170 is a substrate binding site. 2 residues coordinate Zn(2+): Cys-179 and Cys-182.

Belongs to the thymidine kinase family.

It catalyses the reaction thymidine + ATP = dTMP + ADP + H(+). Its function is as follows. Phosphorylates thymidine. ASFV replicates in the cytoplasm of infected cells and contains genes encoding a number of enzymes needed for DNA synthesis, including thymidine kinase. Important for growth in swine macrophages in vitro and is a virus virulence factor in swine. The protein is Thymidine kinase of African swine fever virus (strain Badajoz 1971 Vero-adapted) (Ba71V).